Consider the following 264-residue polypeptide: Glutamate racemase (264 aa).

Residues 9–10 (DS) and 41–42 (YG) contribute to the substrate site. Catalysis depends on Cys72, which acts as the Proton donor/acceptor. A substrate-binding site is contributed by 73-74 (NT). Residue Cys183 is the Proton donor/acceptor of the active site. 184 to 185 (TH) contacts substrate.

The protein belongs to the aspartate/glutamate racemases family.

The catalysed reaction is L-glutamate = D-glutamate. The protein operates within cell wall biogenesis; peptidoglycan biosynthesis. Its function is as follows. Provides the (R)-glutamate required for cell wall biosynthesis. The protein is Glutamate racemase of Geobacillus sp. (strain WCH70).